The chain runs to 239 residues: Ribonuclease PH (239 aa).

Phosphate is bound by residues R86 and 124–126 (GTR).

Belongs to the RNase PH family. As to quaternary structure, homohexameric ring arranged as a trimer of dimers.

The enzyme catalyses tRNA(n+1) + phosphate = tRNA(n) + a ribonucleoside 5'-diphosphate. In terms of biological role, phosphorolytic 3'-5' exoribonuclease that plays an important role in tRNA 3'-end maturation. Removes nucleotide residues following the 3'-CCA terminus of tRNAs; can also add nucleotides to the ends of RNA molecules by using nucleoside diphosphates as substrates, but this may not be physiologically important. Probably plays a role in initiation of 16S rRNA degradation (leading to ribosome degradation) during starvation. The polypeptide is Ribonuclease PH (Sinorhizobium fredii (strain NBRC 101917 / NGR234)).